Consider the following 409-residue polypeptide: Homoserine O-succinyltransferase (409 aa).

The region spanning 43–380 (NAIVVCHALN…PHGHDAFLLD (338 aa)) is the AB hydrolase-1 domain. Residue Ser-149 is the Nucleophile of the active site. Residue Arg-219 participates in substrate binding. A disordered region spans residues 244 to 268 (TLPAARGSLPPEGTDPTRGGPASDR). Active-site residues include Asp-341 and His-374. Asp-375 lines the substrate pocket.

This sequence belongs to the AB hydrolase superfamily. MetX family. Homodimer.

It is found in the cytoplasm. It carries out the reaction L-homoserine + succinyl-CoA = O-succinyl-L-homoserine + CoA. Its pathway is amino-acid biosynthesis; L-methionine biosynthesis via de novo pathway; O-succinyl-L-homoserine from L-homoserine: step 1/1. Functionally, transfers a succinyl group from succinyl-CoA to L-homoserine, forming succinyl-L-homoserine. The sequence is that of Homoserine O-succinyltransferase from Comamonas testosteroni (strain DSM 14576 / KF-1) (Pseudomonas testosteroni).